The chain runs to 148 residues: Large ribosomal subunit protein bL9 (148 aa).

It belongs to the bacterial ribosomal protein bL9 family.

Functionally, binds to the 23S rRNA. In Campylobacter concisus (strain 13826), this protein is Large ribosomal subunit protein bL9.